Reading from the N-terminus, the 283-residue chain is MSILPSFGFTQEQVACVCEVLQQGGNLERLGRFLWSLPACDHLHKNESVLKAKAVVAFHRGNFRELYKILESYQFSTHNHPKMQQLWLKAHYVEAEKLRGRPLGAVGKYRVRRKFPLPRTIWDGEETSYCFKEKSRSVLREWYTHNPYPSPREKRELAEATGLTTTQVSNWFKNRRQRDRAAEAKERENGENNGVGGKQSQRSPLDGVKSLMSSSEDEFSPPQSPEHSSVLLLQGTMNNPAAPAYPMPGLGAPHPLHGMQGHPHQIQDSLLGSLTSSLVDLGS.

A DNA-binding region (homeobox) is located at residues 124-183 (GEETSYCFKEKSRSVLREWYTHNPYPSPREKRELAEATGLTTTQVSNWFKNRRQRDRAAE). The disordered stretch occupies residues 168 to 264 (VSNWFKNRRQ…PLHGMQGHPH (97 aa)). Positions 179–190 (DRAAEAKERENG) are enriched in basic and acidic residues. Low complexity predominate over residues 237-248 (MNNPAAPAYPMP).

It belongs to the SIX/Sine oculis homeobox family.

It localises to the nucleus. The protein resides in the cytoplasm. Functionally, transcription factor that is involved in the regulation of cell proliferation, apoptosis and embryonic development. Depending on context, functions as a transcriptional repressor or activator. Plays an important role in the development of the inner ear, where it promotes hair cell proliferation and inhibits proliferation of neural progenitor cells. Required for normal myogenesis. Plays a role in the development of fast muscle fibers throughout the body, as well as the development of craniofacial muscles. This chain is Homeobox protein six1a (six1a), found in Danio rerio (Zebrafish).